A 138-amino-acid chain; its full sequence is Transcription antitermination protein NusB (138 aa).

The protein belongs to the NusB family.

Its function is as follows. Involved in transcription antitermination. Required for transcription of ribosomal RNA (rRNA) genes. Binds specifically to the boxA antiterminator sequence of the ribosomal RNA (rrn) operons. In Yersinia enterocolitica serotype O:8 / biotype 1B (strain NCTC 13174 / 8081), this protein is Transcription antitermination protein NusB.